Here is a 469-residue protein sequence, read N- to C-terminus: GTPase Der (469 aa).

EngA-type G domains follow at residues 3–166 and 177–350; these read PVIA…PEDE and LRLA…ESAN. Residues 9–16, 56–60, 118–121, 183–190, 230–234, and 295–298 contribute to the GTP site; these read GRPNVGKS, DTGGI, NKVD, DTAGV, and NKWD. Residues 351-435 form the KH-like domain; sequence LKVSPAKLTQ…PVKIEFKTSE (85 aa).

This sequence belongs to the TRAFAC class TrmE-Era-EngA-EngB-Septin-like GTPase superfamily. EngA (Der) GTPase family. As to quaternary structure, associates with the 50S ribosomal subunit.

Its function is as follows. GTPase that plays an essential role in the late steps of ribosome biogenesis. This Acinetobacter baumannii (strain ACICU) protein is GTPase Der.